The chain runs to 393 residues: uncharacterized protein (393 aa).

The region spanning 250 to 389 (AVIVYDTMYN…KCYEFGKRLA (140 aa)) is the Flavodoxin-like domain.

This is an uncharacterized protein from Methanocaldococcus jannaschii (strain ATCC 43067 / DSM 2661 / JAL-1 / JCM 10045 / NBRC 100440) (Methanococcus jannaschii).